A 191-amino-acid polypeptide reads, in one-letter code: UPF0398 protein LSEI_1479 (191 aa).

This sequence belongs to the UPF0398 family.

This Lacticaseibacillus paracasei (strain ATCC 334 / BCRC 17002 / CCUG 31169 / CIP 107868 / KCTC 3260 / NRRL B-441) (Lactobacillus paracasei) protein is UPF0398 protein LSEI_1479.